The chain runs to 524 residues: Apoptosis inhibitor 5 (524 aa).

The segment at 2 to 360 (PTVEELYRNY…HQLGRKLPDF (359 aa)) is ARM-like and Heat-like helical repeats. Position 251 is an N6-acetyllysine (lysine 251). Residues 370-391 (LKDFKIRLQYFARGLQVYIRQL) form a leucine-zipper region. Threonine 399 is modified (phosphothreonine). Positions 452–524 (GQKRASEDTT…RGNRSRGRLY (73 aa)) are disordered. Residues 454-475 (KRASEDTTSGSPPKKSSAGPKR) carry the Nuclear localization signal motif. A phosphoserine mark is found at serine 462, serine 464, and serine 469. Residues 462–472 (SGSPPKKSSAG) show a composition bias toward low complexity. A compositionally biased stretch (polar residues) spans 487-497 (KYSSNLGNFNY). Arginine 500 is modified (omega-N-methylarginine).

Belongs to the API5 family. In terms of assembly, monomer. Interacts with FGF2 and ACIN1. Acetylation at Lys-251 impairs antiapoptotic function. Expressed in all tissues tested, including heart, brain, placenta, lung, liver, skeletal muscle, kidney and pancreas. Highest levels in heart, pancreas and placenta. Highly expressed in several cancers. Preferentially expressed in squamous cell carcinoma versus adenocarcinoma in non-small cell lung cancer.

Its subcellular location is the nucleus. It localises to the cytoplasm. In terms of biological role, antiapoptotic factor that may have a role in protein assembly. Negatively regulates ACIN1. By binding to ACIN1, it suppresses ACIN1 cleavage from CASP3 and ACIN1-mediated DNA fragmentation. Also known to efficiently suppress E2F1-induced apoptosis. Its depletion enhances the cytotoxic action of the chemotherapeutic drugs. This chain is Apoptosis inhibitor 5, found in Homo sapiens (Human).